Reading from the N-terminus, the 938-residue chain is Respiratory burst oxidase homolog protein C (938 aa).

The segment at 1 to 63 (MQNSENHHPH…DIGTSAGAGA (63 aa)) is disordered. Over 1–369 (MQNSENHHPH…MYFLLDNWQR (369 aa)) the chain is Cytoplasmic. Positions 115 to 141 (ASLVRNASSRIRQVSQELKRLASLNKR) form a coiled coil. 2 EF-hand-like regions span residues 185 to 195 (TAPTTGLLPRA) and 222 to 233 (RNITTDSINKAQ). EF-hand domains are found at residues 245-280 (SFDT…SASA) and 289-324 (QSDE…APNQ). Ca(2+) contacts are provided by Asp-258, Asp-260, Asp-262, Arg-264, and Glu-269. The chain crosses the membrane as a helical span at residues 370 to 390 (VWVLLLWIGIMAVLFTWKYIQ). The Extracellular segment spans residues 391–402 (YKQKAAYDVMGP). Residues 403-423 (CVCLAKGAAETIKLNMAIILL) form a helical membrane-spanning segment. One can recognise a Ferric oxidoreductase domain in the interval 408-565 (KGAAETIKLN…LFIIVYTLLI (158 aa)). Residues 424–454 (PVCRNTITWLRNKTRLGSAVPFDDNLNFHKV) are Cytoplasmic-facing. A helical membrane pass occupies residues 455–475 (IAVAIALGVAIHGLAHLTCDF). Residues 476 to 509 (PKLLNASEEAYEPMIYYFGEQPESYWWFVRGVEG) are Extracellular-facing. Residues 510 to 530 (VTGIIMVVLMAIAFTLATPWF) traverse the membrane as a helical segment. The Cytoplasmic segment spans residues 531–545 (RRGRVSFPKPFHKLT). A helical membrane pass occupies residues 546–566 (GFNAFWYSHHLFIIVYTLLIV). Topologically, residues 567 to 580 (HGEKLYITKDWYKR) are extracellular. The helical transmembrane segment at 581-599 (STWMYLTVPLVLYAGERLL) threads the bilayer. Residues 599 to 727 (LRAFRSSIKA…DGPYGAPAQD (129 aa)) enclose the FAD-binding FR-type domain. Residues 600–732 (RAFRSSIKAV…APAQDYKQYE (133 aa)) are Cytoplasmic-facing. A helical transmembrane segment spans residues 733-753 (VVLLVGLGIGATPMISIVKDI). Over 754-938 (VNNMKAMDEE…TKFDFHKENF (185 aa)) the chain is Extracellular. Residues 762 to 796 (EEENSLENGNGMSNAAQNASPNMAQKRGKSSSASG) are disordered. A compositionally biased stretch (polar residues) spans 767–784 (LENGNGMSNAAQNASPNM).

Belongs to the RBOH (TC 5.B.1.3) family. In terms of assembly, monomer and homodimer. In terms of processing, phosphorylated by CPK. Expressed in leaves.

Its subcellular location is the membrane. Calcium-dependent NADPH oxidase that generates superoxide. May be responsible for the oxidative burst in response to pathogen attack in the leaves. The chain is Respiratory burst oxidase homolog protein C (RBOHC) from Solanum tuberosum (Potato).